Consider the following 528-residue polypeptide: Phosphoenolpyruvate carboxykinase (ATP) (528 aa).

Positions 54, 190, and 196 each coordinate substrate. ATP contacts are provided by residues lysine 196, histidine 215, and 231–239 (GLSGTGKTT). Lysine 196 and histidine 215 together coordinate Mn(2+). Aspartate 252 contacts Mn(2+). Positions 280, 316, and 441 each coordinate ATP. Substrate is bound at residue arginine 316.

This sequence belongs to the phosphoenolpyruvate carboxykinase (ATP) family. Requires Mn(2+) as cofactor.

Its subcellular location is the cytoplasm. It catalyses the reaction oxaloacetate + ATP = phosphoenolpyruvate + ADP + CO2. It participates in carbohydrate biosynthesis; gluconeogenesis. Its function is as follows. Involved in the gluconeogenesis. Catalyzes the conversion of oxaloacetate (OAA) to phosphoenolpyruvate (PEP) through direct phosphoryl transfer between the nucleoside triphosphate and OAA. The sequence is that of Phosphoenolpyruvate carboxykinase (ATP) from Sulfurimonas denitrificans (strain ATCC 33889 / DSM 1251) (Thiomicrospira denitrificans (strain ATCC 33889 / DSM 1251)).